Consider the following 134-residue polypeptide: Profilin-3 (134 aa).

Residues C13 and C118 are joined by a disulfide bond. The short motif at 84–100 (AVIRGKKGSGGITIKKT) is the Involved in PIP2 interaction element. T114 bears the Phosphothreonine mark.

It belongs to the profilin family. As to quaternary structure, occurs in many kinds of cells as a complex with monomeric actin in a 1:1 ratio. Phosphorylated by MAP kinases.

The protein resides in the cytoplasm. Its subcellular location is the cytoskeleton. Its function is as follows. Binds to actin and affects the structure of the cytoskeleton. At high concentrations, profilin prevents the polymerization of actin, whereas it enhances it at low concentrations. This Olea europaea (Common olive) protein is Profilin-3.